We begin with the raw amino-acid sequence, 345 residues long: Beta-hexosaminidase (345 aa).

Residues Asp-60, Arg-68, Arg-132, and 162 to 163 (KH) each bind substrate. Residue His-175 is the Proton donor/acceptor of the active site. The active-site Nucleophile is Asp-247.

It belongs to the glycosyl hydrolase 3 family. NagZ subfamily.

The protein resides in the cytoplasm. The catalysed reaction is Hydrolysis of terminal non-reducing N-acetyl-D-hexosamine residues in N-acetyl-beta-D-hexosaminides.. It functions in the pathway cell wall biogenesis; peptidoglycan recycling. Plays a role in peptidoglycan recycling by cleaving the terminal beta-1,4-linked N-acetylglucosamine (GlcNAc) from peptide-linked peptidoglycan fragments, giving rise to free GlcNAc, anhydro-N-acetylmuramic acid and anhydro-N-acetylmuramic acid-linked peptides. This Actinobacillus pleuropneumoniae serotype 3 (strain JL03) protein is Beta-hexosaminidase.